The primary structure comprises 449 residues: Gallate transporter (449 aa).

12 consecutive transmembrane segments (helical) span residues 26–46 (WLIL…VAVM), 62–82 (AAFG…ALTA), 92–112 (KKVL…CAFA), 123–143 (LLTG…LAEY), 155–175 (IMFT…AWLI), 183–203 (VLLA…WLLP), 262–282 (LALW…MGWL), 298–318 (TITG…GWIM), 326–346 (VIAI…ALSL), 349–369 (SLLV…QTAL), 388–408 (WMLG…GAVL), and 414–434 (LPLL…AILA).

Belongs to the major facilitator superfamily. Sugar transporter (TC 2.A.1.1) family.

It localises to the membrane. Its function is as follows. Transporter that specifically mediates the uptake of gallate. This chain is Gallate transporter (galT), found in Pseudomonas putida (Arthrobacter siderocapsulatus).